Here is a 461-residue protein sequence, read N- to C-terminus: Argininosuccinate lyase (461 aa).

The protein belongs to the lyase 1 family. Argininosuccinate lyase subfamily.

It is found in the cytoplasm. The catalysed reaction is 2-(N(omega)-L-arginino)succinate = fumarate + L-arginine. The protein operates within amino-acid biosynthesis; L-arginine biosynthesis; L-arginine from L-ornithine and carbamoyl phosphate: step 3/3. This is Argininosuccinate lyase from Aeromonas hydrophila subsp. hydrophila (strain ATCC 7966 / DSM 30187 / BCRC 13018 / CCUG 14551 / JCM 1027 / KCTC 2358 / NCIMB 9240 / NCTC 8049).